The chain runs to 183 residues: Hypoxanthine/guanine phosphoribosyltransferase (183 aa).

This sequence belongs to the purine/pyrimidine phosphoribosyltransferase family. Archaeal HPRT subfamily. As to quaternary structure, homodimer.

It is found in the cytoplasm. The enzyme catalyses IMP + diphosphate = hypoxanthine + 5-phospho-alpha-D-ribose 1-diphosphate. The catalysed reaction is GMP + diphosphate = guanine + 5-phospho-alpha-D-ribose 1-diphosphate. It functions in the pathway purine metabolism; IMP biosynthesis via salvage pathway; IMP from hypoxanthine: step 1/1. Its function is as follows. Catalyzes a salvage reaction resulting in the formation of IMP that is energically less costly than de novo synthesis. This Methanocaldococcus infernus (strain DSM 11812 / JCM 15783 / ME) protein is Hypoxanthine/guanine phosphoribosyltransferase.